The following is a 274-amino-acid chain: HTH-type transcriptional regulator GadX (274 aa).

The HTH araC/xylS-type domain occupies 145–242; that stretch reads TRVCTVINNN…GMTPTEYQER (98 aa). DNA-binding regions (H-T-H motif) lie at residues 162 to 183 and 209 to 232; these read ARIASELLMSPSLLKKKLREEG and IKRVAVSCGYHSVSYFIYVFRNYY.

Homodimer.

Positively regulates the expression of about fifteen genes involved in acid resistance such as gadA, gadB and gadC. Depending on the conditions (growth phase and medium), can repress gadW. The sequence is that of HTH-type transcriptional regulator GadX (gadX) from Escherichia coli O6:H1 (strain CFT073 / ATCC 700928 / UPEC).